A 348-amino-acid chain; its full sequence is Protein RecA (348 aa).

66-73 is an ATP binding site; sequence GPESSGKT.

The protein belongs to the RecA family.

The protein resides in the cytoplasm. Functionally, can catalyze the hydrolysis of ATP in the presence of single-stranded DNA, the ATP-dependent uptake of single-stranded DNA by duplex DNA, and the ATP-dependent hybridization of homologous single-stranded DNAs. It interacts with LexA causing its activation and leading to its autocatalytic cleavage. This Neisseria meningitidis serogroup C / serotype 2a (strain ATCC 700532 / DSM 15464 / FAM18) protein is Protein RecA.